The following is a 376-amino-acid chain: Aspartate-semialdehyde dehydrogenase (376 aa).

Residues 11-14 (RGMV), 38-39 (TS), and glutamine 74 each bind NADP(+). Residue arginine 103 coordinates phosphate. Cysteine 136 serves as the catalytic Acyl-thioester intermediate. Glutamine 163 contacts substrate. Residues 166-167 (SG) and proline 194 each bind NADP(+). Glutamate 242 lines the substrate pocket. Phosphate is bound at residue lysine 245. Arginine 273 lines the substrate pocket. Residue histidine 280 is the Proton acceptor of the active site. Glutamine 356 provides a ligand contact to NADP(+).

Belongs to the aspartate-semialdehyde dehydrogenase family. In terms of assembly, homodimer.

It catalyses the reaction L-aspartate 4-semialdehyde + phosphate + NADP(+) = 4-phospho-L-aspartate + NADPH + H(+). The protein operates within amino-acid biosynthesis; L-lysine biosynthesis via DAP pathway; (S)-tetrahydrodipicolinate from L-aspartate: step 2/4. It participates in amino-acid biosynthesis; L-methionine biosynthesis via de novo pathway; L-homoserine from L-aspartate: step 2/3. Its pathway is amino-acid biosynthesis; L-threonine biosynthesis; L-threonine from L-aspartate: step 2/5. Functionally, catalyzes the NADPH-dependent formation of L-aspartate-semialdehyde (L-ASA) by the reductive dephosphorylation of L-aspartyl-4-phosphate. The sequence is that of Aspartate-semialdehyde dehydrogenase from Bordetella pertussis (strain Tohama I / ATCC BAA-589 / NCTC 13251).